Consider the following 303-residue polypeptide: Sulfate adenylyltransferase subunit 2 (303 aa).

This sequence belongs to the PAPS reductase family. CysD subfamily. Heterodimer composed of CysD, the smaller subunit, and CysN.

The enzyme catalyses sulfate + ATP + H(+) = adenosine 5'-phosphosulfate + diphosphate. The protein operates within sulfur metabolism; hydrogen sulfide biosynthesis; sulfite from sulfate: step 1/3. Its function is as follows. With CysN forms the ATP sulfurylase (ATPS) that catalyzes the adenylation of sulfate producing adenosine 5'-phosphosulfate (APS) and diphosphate, the first enzymatic step in sulfur assimilation pathway. APS synthesis involves the formation of a high-energy phosphoric-sulfuric acid anhydride bond driven by GTP hydrolysis by CysN coupled to ATP hydrolysis by CysD. The sequence is that of Sulfate adenylyltransferase subunit 2 from Phocaeicola vulgatus (strain ATCC 8482 / DSM 1447 / JCM 5826 / CCUG 4940 / NBRC 14291 / NCTC 11154) (Bacteroides vulgatus).